Here is an 823-residue protein sequence, read N- to C-terminus: Ankyrin repeat domain-containing protein 20B (823 aa).

ANK repeat units follow at residues 32–65 (SELQ…ARDK), 66–95 (QHRT…QIDI), 99–128 (ENRT…NPNL), 132–161 (YGNT…HIEA), 165–194 (DSNT…STHA), and 198–227 (LRRS…DVFA). 2 disordered regions span residues 302-343 (PEKV…GVED) and 355-401 (VQTL…QLSE). A compositionally biased stretch (basic and acidic residues) spans 372–382 (QERHERSEKKQ). Coiled-coil stretches lie at residues 431–480 (KKLK…KQLE), 565–724 (EMIT…NNST), and 776–805 (LVLE…EKAE).

In Homo sapiens (Human), this protein is Ankyrin repeat domain-containing protein 20B (ANKRD20A8P).